Reading from the N-terminus, the 55-residue chain is A-type ATP synthase subunit G (55 aa).

Has multiple subunits, A(3), B(3), C, D, E, F, G, I and K(x); there may be a few other subunits as well.

Its subcellular location is the cell membrane. Component of the A-type ATP synthase that produces ATP from ADP in the presence of a proton gradient across the membrane. This chain is A-type ATP synthase subunit G (atpG), found in Methanosarcina mazei (strain ATCC BAA-159 / DSM 3647 / Goe1 / Go1 / JCM 11833 / OCM 88) (Methanosarcina frisia).